A 407-amino-acid chain; its full sequence is SERPINE1 mRNA-binding protein 1 (407 aa).

Serine 25 bears the Phosphoserine mark. Positions 33-227 (AAENKKKEAG…GSGSHNWGTV (195 aa)) are disordered. Residues 51 to 68 (AKSAAQAAAQTNSNAAGK) show a composition bias toward low complexity. Lysine 52 carries the post-translational modification N6-acetyllysine; alternate. A Glycyl lysine isopeptide (Lys-Gly) (interchain with G-Cter in SUMO1); alternate cross-link involves residue lysine 52. Lysine 68 bears the N6-acetyllysine mark. 3 stretches are compositionally biased toward basic and acidic residues: residues 70–80 (LRKESQKDRKN), 89–114 (ADKK…RRPD), and 122–162 (KLID…ERPI). Lysine 102 participates in a covalent cross-link: Glycyl lysine isopeptide (Lys-Gly) (interchain with G-Cter in SUMO2). 2 positions are modified to N6-acetyllysine: lysine 122 and lysine 140. Residues 164–182 (GRGGLGRGRGGRGRGMGRG) show a composition bias toward gly residues. Omega-N-methylarginine is present on residues arginine 165 and arginine 188. The segment covering 183 to 199 (DGFDSRGKREFDRHSGS) has biased composition (basic and acidic residues). A phosphoserine mark is found at serine 197, serine 199, serine 203, serine 205, and serine 208. An N6-acetyllysine; alternate modification is found at lysine 211. Lysine 211 is covalently cross-linked (Glycyl lysine isopeptide (Lys-Gly) (interchain with G-Cter in SUMO2); alternate). Omega-N-methylarginine is present on arginine 216. Serine 221 bears the Phosphoserine mark. At threonine 226 the chain carries Phosphothreonine. Lysine 228 is covalently cross-linked (Glycyl lysine isopeptide (Lys-Gly) (interchain with G-Cter in SUMO1); alternate). Residue lysine 228 forms a Glycyl lysine isopeptide (Lys-Gly) (interchain with G-Cter in SUMO2); alternate linkage. 3 positions are modified to phosphoserine: leucine 231, serine 234, and tyrosine 237. Phosphothreonine is present on serine 234. The residue at position 240 (lysine 240) is a Phosphothreonine. Positions 242–256 (ISYNCSDLDQSNVTE) are enriched in polar residues. Disordered regions lie at residues 242 to 288 (ISYN…KEMT) and 327 to 407 (SKSE…PALA). Positions 261 to 274 (GEEHPVADTENKEN) are enriched in basic and acidic residues. Residue lysine 280 forms a Glycyl lysine isopeptide (Lys-Gly) (interchain with G-Cter in SUMO2) linkage. A compositionally biased stretch (basic and acidic residues) spans 327–341 (SKSEEAHAEDSVMDH). Lysine 328 is modified (N6-acetyllysine). Serine 329 is subject to Phosphoserine. Residues 362-371 (GRPGRGGRGG) show a composition bias toward gly residues. Residues arginine 363, arginine 366, and arginine 369 each carry the omega-N-methylarginine modification. 2 positions are modified to phosphoserine: serine 391 and serine 393.

Belongs to the SERBP1-HABP4 family. As to quaternary structure, associates with mature 80S ribosomes. Interacts with EEF2/eEF2; interaction sequesters EEF2/eEF2 at the A-site of the ribosome, thereby blocking the interaction sites of the mRNA-tRNA complex, promoting ribosome stabilization and hibernation. Interacts with SPIN1. Interacts with CHD3 and TDRD3. Interacts with ZDHHC17 (via ANK repeats). Post-translationally, phosphorylation by MTOR inhibits SERBP1 and relieves ribosome hibernation.

The protein resides in the cytoplasm. It localises to the nucleus. The protein localises to the perinuclear region. Ribosome-binding protein that promotes ribosome hibernation, a process during which ribosomes are stabilized in an inactive state and preserved from proteasomal degradation. Acts via its association with EEF2/eEF2 factor, sequestering EEF2/eEF2 at the A-site of the ribosome and promoting ribosome stabilization and storage in an inactive state. May also play a role in the regulation of mRNA stability: binds to the 3'-most 134 nt of the SERPINE1/PAI1 mRNA, a region which confers cyclic nucleotide regulation of message decay. Seems to play a role in PML-nuclear bodies formation. The polypeptide is SERPINE1 mRNA-binding protein 1 (Mus musculus (Mouse)).